A 200-amino-acid chain; its full sequence is THO complex subunit tho5 (200 aa).

It belongs to the THOC5 family. As to quaternary structure, component of the THO and TREX complexes.

The protein localises to the cytoplasm. It is found in the nucleus. Component the THO subcomplex of the TREX complex, which operates in coupling transcription elongation to mRNA export. The THO complex is recruited to transcribed genes and moves along the gene with the elongating polymerase during transcription. THO is important for stabilizing nascent RNA in the RNA polymerase II elongation complex by preventing formation of DNA:RNA hybrids behind the elongating polymerase. The THO complex is also required to maintain TRAMP complex occupancy at sites of snoRNA transcription thus promoting exosome-mediated degradation of snoRNA precursors. The sequence is that of THO complex subunit tho5 from Schizosaccharomyces pombe (strain 972 / ATCC 24843) (Fission yeast).